We begin with the raw amino-acid sequence, 60 residues long: Large ribosomal subunit protein bL32 (60 aa).

Disordered regions lie at residues 1 to 28 and 41 to 60; these read MAVQ…PGIA and HISP…KSEA. The span at 9–19 shows a compositional bias: basic residues; sequence SPSKRGMHRSH.

Belongs to the bacterial ribosomal protein bL32 family.

In Verminephrobacter eiseniae (strain EF01-2), this protein is Large ribosomal subunit protein bL32.